Reading from the N-terminus, the 96-residue chain is Large ribosomal subunit protein eL14 (96 aa).

Belongs to the eukaryotic ribosomal protein eL14 family.

The sequence is that of Large ribosomal subunit protein eL14 from Sulfurisphaera tokodaii (strain DSM 16993 / JCM 10545 / NBRC 100140 / 7) (Sulfolobus tokodaii).